A 1580-amino-acid chain; its full sequence is Ras GTPase-activating protein raskol (1580 aa).

Position 164 is a phosphoserine (Ser164). Thr167 carries the post-translational modification Phosphothreonine. Residues 197 to 223 (LKRTKSVTKLERTKRGSGGLRGSRSHE) form a disordered region. Phosphoserine is present on residues Ser221 and Ser224. The region spanning 233–291 (STIDLSCTGAVGVAPVHQSVLGRRHCFQVRGGPRGERYYSCGSRQERDLWIYSLRKSIA) is the PH domain. One can recognise a C2 domain in the interval 282 to 400 (WIYSLRKSIA…TSRLPCEQWY (119 aa)). The Ras-GAP domain occupies 490 to 700 (GLAGAFLTDV…ARMQQFLEII (211 aa)). Disordered regions lie at residues 764-819 (GMGT…QPQH), 857-892 (LLQQ…HQHP), 904-1023 (AGNQ…SYDD), 1112-1218 (ANHH…QQFG), 1284-1313 (LSGG…YGRL), 1334-1443 (VGYG…LGKS), and 1561-1580 (YETQ…QKPQ). Residues 776–805 (ATSSTHSIASENQENRNPGSSGSHAGSNSE) show a composition bias toward polar residues. Low complexity-rich tracts occupy residues 806-818 (QLLP…AQPQ), 857-885 (LLQQ…GHQQ), and 926-939 (SSSL…LLHG). Positions 940-954 (HQQHAHHPQQLHPHH) are enriched in basic residues. Residues 987 to 1020 (TSTPSSTRSRTLPRNGNPNANGNVGSSNNNQSGS) are compositionally biased toward low complexity. Polar residues predominate over residues 1140–1150 (SAKSSHCSSGY). A compositionally biased stretch (low complexity) spans 1151–1169 (QSISTNPSPSQSSSPVESQ). A phosphoserine mark is found at Ser1158 and Ser1164. Polar residues predominate over residues 1186-1206 (PSYQLQPQTGSSRSSAQSNTH). Low complexity-rich tracts occupy residues 1207 to 1216 (QQQQQQQQQQ), 1285 to 1299 (SGGS…ASTS), and 1351 to 1362 (HQQQQNPMQQQQ). The segment covering 1363 to 1372 (QRERDQEHKQ) has biased composition (basic and acidic residues). Residues 1374-1388 (AGSVAGSVGSATSAA) show a composition bias toward low complexity. The span at 1396–1415 (SARTLSDSSTDTEGHCNQLQ) shows a compositional bias: polar residues. 2 positions are modified to phosphoserine: Ser1401 and Ser1403. Positions 1427–1438 (GGSGGGGAGSEQ) are enriched in gly residues. Positions 1563 to 1580 (TQQQQQQHQAPPKTQKPQ) are enriched in low complexity.

It localises to the cytoplasm. It is found in the cell membrane. Its subcellular location is the apical cell membrane. GTPase-activating protein, which acts as a negative regulator for some members of the Ras family. Probably decreases their signaling activity by stimulating their intrinsic GTPase activity, thereby lowering the levels of the GTP-bound active form. Functions with DE-cadherin (shg) to promote embryonic border cell (BC) migration and adhesion by regulating the distribution of actin protrusions in BCs. Promotes shg-mediated adhesion at the BC interfaces and likely maintains BC cluster adhesion during BC detachment from the follicular epithelium and subsequent BC migration. Also required for restricting the development of actin-rich protrusions to the front of migrating BC clusters thus ensuring unidirectional BC migration. Possibly functions by suppressing Rac1 signaling in non-leading BCs, thus limiting its activity to leading BCs where it initiates localized actin cytoskeleton remodeling to produce the polarized protrusions. This Drosophila melanogaster (Fruit fly) protein is Ras GTPase-activating protein raskol.